The primary structure comprises 310 residues: Homoserine O-acetyltransferase (310 aa).

Residue Cys142 is the Acyl-thioester intermediate of the active site. 2 residues coordinate substrate: Lys163 and Ser192. His235 acts as the Proton acceptor in catalysis. Glu237 is an active-site residue. Arg249 contributes to the substrate binding site.

The protein belongs to the MetA family.

The protein resides in the cytoplasm. It catalyses the reaction L-homoserine + acetyl-CoA = O-acetyl-L-homoserine + CoA. Its pathway is amino-acid biosynthesis; L-methionine biosynthesis via de novo pathway; O-acetyl-L-homoserine from L-homoserine: step 1/1. In terms of biological role, transfers an acetyl group from acetyl-CoA to L-homoserine, forming acetyl-L-homoserine. This is Homoserine O-acetyltransferase from Parabacteroides distasonis (strain ATCC 8503 / DSM 20701 / CIP 104284 / JCM 5825 / NCTC 11152).